The following is a 449-amino-acid chain: Probable glycine dehydrogenase (decarboxylating) subunit 1 (449 aa).

It belongs to the GcvP family. N-terminal subunit subfamily. As to quaternary structure, the glycine cleavage system is composed of four proteins: P, T, L and H. In this organism, the P 'protein' is a heterodimer of two subunits.

It carries out the reaction N(6)-[(R)-lipoyl]-L-lysyl-[glycine-cleavage complex H protein] + glycine + H(+) = N(6)-[(R)-S(8)-aminomethyldihydrolipoyl]-L-lysyl-[glycine-cleavage complex H protein] + CO2. Its function is as follows. The glycine cleavage system catalyzes the degradation of glycine. The P protein binds the alpha-amino group of glycine through its pyridoxal phosphate cofactor; CO(2) is released and the remaining methylamine moiety is then transferred to the lipoamide cofactor of the H protein. This is Probable glycine dehydrogenase (decarboxylating) subunit 1 from Oceanobacillus iheyensis (strain DSM 14371 / CIP 107618 / JCM 11309 / KCTC 3954 / HTE831).